Reading from the N-terminus, the 380-residue chain is tRNA-specific 2-thiouridylase MnmA (380 aa).

ATP is bound by residues 9–16 and M35; that span reads GVSGGVDS. Positions 94-96 are interaction with target base in tRNA; sequence NPD. Catalysis depends on C99, which acts as the Nucleophile. A disulfide bridge connects residues C99 and C195. Residue G123 coordinates ATP. The tract at residues 145-147 is interaction with tRNA; the sequence is KDQ. C195 (cysteine persulfide intermediate) is an active-site residue. An interaction with tRNA region spans residues 308 to 309; the sequence is RY.

This sequence belongs to the MnmA/TRMU family.

It is found in the cytoplasm. The catalysed reaction is S-sulfanyl-L-cysteinyl-[protein] + uridine(34) in tRNA + AH2 + ATP = 2-thiouridine(34) in tRNA + L-cysteinyl-[protein] + A + AMP + diphosphate + H(+). Functionally, catalyzes the 2-thiolation of uridine at the wobble position (U34) of tRNA, leading to the formation of s(2)U34. This is tRNA-specific 2-thiouridylase MnmA from Stenotrophomonas maltophilia (strain R551-3).